A 461-amino-acid polypeptide reads, in one-letter code: UDP-glucosyltransferase 1 (461 aa).

Belongs to the UDP-glycosyltransferase family.

The protein operates within secondary metabolite biosynthesis. UDP-glucosyltransferase; part of the pathway that mediates the biosynthesis of tenellin-type 2-pyridones, iron-chelating compounds involved in iron stress tolerance, competition with the natural competitor fungus Metarhizium robertsii and insect hosts infection. Targets the N-OH hydroxyl residue of 15-hydroxytellenin (15-HT) to produce pyridovericin-N-O-(beta-D-glucopyranoside) which is further methylated by the methyltransferase MT1 to yield pyridovericin-N-O-(4-O-methyl-beta-D-glucopyranoside) (PMGP). The pathway begins with the assembly of the polyketide-amino acid backbone by the hybrid PKS-NRPS tenS with the help of the enoyl reductase tenC. These enzymes catalyze the synthesis of the pyrrolidine-2-dione intermediates pretellinin A, 11-hydropretellenin A, 12-hydropretellenin A, 13-hydropretellenin A, 14-hydropretellenin A, 12-oxopretellenin A and prototellinin D. The cytochrome P450 monooxygenase tenA then catalyzes an oxidative ring expansion of pretenellin A and 14-hydropretellenin A to form the 2-pyridone core, leading to pretenellin B and pyridovericin, respectively. The cytochrome P450 monooxygenase tenB is then required for the selective N-hydroxylation of the 2-pyridone nitrogen of yield tellinin and 15-hydroxytellenin (15-HT), respectively. The UDP-glucosyltransferase GT1 and the methyltransferase MT1, located outside the tenS gene cluster, contribute to the stepwise glycosylation and methylation of 15-HT to obtain the glycoside pyridovericin-N-O-(4-O-methyl-beta-D-glucopyranoside) (PMGP). Additional related compounds such as 1-O-methyl-15-HT, (8Z)-1-O-methyl-15-HT, and O-methyltenellin A are also produced but the enzymes involved in their biosynthesis have still to be determined. The protein is UDP-glucosyltransferase 1 of Beauveria bassiana (strain ARSEF 2860) (White muscardine disease fungus).